Here is a 48-residue protein sequence, read N- to C-terminus: Bacteriocin plantaricin-A (48 aa).

Residues 1 to 25 (MKIQIKGMKQLSNKEMQKIVGGKSS) constitute a propeptide that is removed on maturation.

As to quaternary structure, active plantaricin A is composed of an alpha chain and a beta chain.

Functionally, this heat stable bacteriocin inhibits the growth of closely related Lactobacillus species. It may act as a pore-forming protein, creating a channel in the cell membrane through a 'barrel stave' mechanism. This chain is Bacteriocin plantaricin-A (plnA), found in Lactiplantibacillus plantarum (strain ATCC BAA-793 / NCIMB 8826 / WCFS1) (Lactobacillus plantarum).